The following is a 202-amino-acid chain: COMM domain-containing protein 10 (202 aa).

Alanine 2 is modified (N-acetylalanine). A COMM domain is found at lysine 133–threonine 202. Serine 155 carries the post-translational modification Phosphoserine.

Belongs to the COMM domain-containing protein 10 family. Component of the commander complex consisting of the CCC subcomplex and the retriever subcomplex. Component of the CCC (COMMD/CCDC22/CCDC93) subcomplex consisting of COMMD1, COMMD2, COMMD3, COMMD4, COMMD5, COMMD6, COMMD7, COMMD8, COMMD9, COMMD10, CCDC22 and CCDC93; within the complex forms a heterodimer with COMMD5. Interacts with RELA, RELB, NFKB1/p105, NFKB2/p100. Interacts with CCDC22, CCDC93, SCNN1B, CUL1, CUL2, CUL3, CUL4A, CUL4B, CUL7. In terms of tissue distribution, ubiquitous.

The protein resides in the cytoplasm. It localises to the nucleus. Its function is as follows. Scaffold protein in the commander complex that is essential for endosomal recycling of transmembrane cargos; the commander complex is composed of the CCC subcomplex and the retriever subcomplex. May modulate activity of cullin-RING E3 ubiquitin ligase (CRL) complexes. May down-regulate activation of NF-kappa-B. The sequence is that of COMM domain-containing protein 10 (COMMD10) from Homo sapiens (Human).